The primary structure comprises 235 residues: MSETQDFAALEARLGHSFADRSHLVLALTHISSVKGQAVRVRSYQRLEFLGDHVLGSVVSHMLYAAFPKAEEGELSRRLAELVREEACAEVAQDMGLGPYLRLGPGEAQSGARQRRAILADVAEAVVAAVYLDGGYEAASALVERFWRGRLEAPRRPLRDPKTVLQEWAQARGLPPPVYRDVERSGPDHAPRFRVAVDLPGLECAEAEGGSKQTAQKAAASAFLAREGVVTESGE.

The region spanning 7–135 (FAALEARLGH…VVAAVYLDGG (129 aa)) is the RNase III domain. Residue Glu48 coordinates Mg(2+). Asp52 is an active-site residue. Mg(2+)-binding residues include Asp121 and Glu124. The active site involves Glu124. Residues 160 to 229 (DPKTVLQEWA…ASAFLAREGV (70 aa)) enclose the DRBM domain.

It belongs to the ribonuclease III family. In terms of assembly, homodimer. Mg(2+) serves as cofactor.

It localises to the cytoplasm. It carries out the reaction Endonucleolytic cleavage to 5'-phosphomonoester.. Functionally, digests double-stranded RNA. Involved in the processing of primary rRNA transcript to yield the immediate precursors to the large and small rRNAs (23S and 16S). Processes some mRNAs, and tRNAs when they are encoded in the rRNA operon. Processes pre-crRNA and tracrRNA of type II CRISPR loci if present in the organism. The sequence is that of Ribonuclease 3 from Azorhizobium caulinodans (strain ATCC 43989 / DSM 5975 / JCM 20966 / LMG 6465 / NBRC 14845 / NCIMB 13405 / ORS 571).